The following is a 242-amino-acid chain: Segregation and condensation protein A (242 aa).

Belongs to the ScpA family. Component of a cohesin-like complex composed of ScpA, ScpB and the Smc homodimer, in which ScpA and ScpB bind to the head domain of Smc. The presence of the three proteins is required for the association of the complex with DNA.

It is found in the cytoplasm. Functionally, participates in chromosomal partition during cell division. May act via the formation of a condensin-like complex containing Smc and ScpB that pull DNA away from mid-cell into both cell halves. This is Segregation and condensation protein A from Streptococcus pneumoniae serotype 19F (strain G54).